The chain runs to 592 residues: Putative uric acid sigma-54-dependent transcriptional regulator UacR (592 aa).

The PAS domain occupies Ile158–Asp229. Residues Leu272–Asn502 enclose the Sigma-54 factor interaction domain. Residues Gly300–Glu307 and Ala364–Glu373 each bind ATP. Positions Lys567–Lys585 form a DNA-binding region, H-T-H motif.

Essential for both formate-dependent and formate-independent uric acid degradation. May be directly involved in the transcription of uacF in response to hypoxanthine, xanthine, and uric acid. This is Putative uric acid sigma-54-dependent transcriptional regulator UacR from Escherichia coli (strain K12).